The following is a 298-amino-acid chain: MKPNMACLKQVSALLLPLLFISFFKPSHAGGISVYWGQNGNEGSLADACNTGNYKYVNIAFLFTFGGGQTPQLNLAGHCNPSINNCNVFSDQIKECQSKDIKVLLSLGGASGSYSLTSADDATQVANYIWNNFLGGQSSSRPLGDAILDGVDFDIESGTGEHWDDLARALKGFNSQLLLTAAPQCPIPDAHLDTAIKTGLFDIVWVQFYNNPPCQYSSGNTNDLISSWNQWTSSQAKQLFLGVPASTAAAGSGFIPADVLTSQVLPTIKGSSKYGGVMLWDRFNDGQSGYSGAIIGSV.

Residues 1–29 (MKPNMACLKQVSALLLPLLFISFFKPSHA) form the signal peptide. The region spanning 30–298 (GGISVYWGQN…GYSGAIIGSV (269 aa)) is the GH18 domain. Disulfide bonds link Cys49/Cys96 and Cys79/Cys86. Glu156 (proton donor) is an active-site residue. Cysteines 185 and 214 form a disulfide.

The protein belongs to the glycosyl hydrolase 18 family. Chitinase class II subfamily.

The protein resides in the secreted. It is found in the extracellular space. It catalyses the reaction Random endo-hydrolysis of N-acetyl-beta-D-glucosaminide (1-&gt;4)-beta-linkages in chitin and chitodextrins.. This protein functions as a defense against chitin containing fungal pathogens. In Phaseolus angularis (Azuki bean), this protein is Acidic endochitinase.